A 133-amino-acid chain; its full sequence is Magnetosome protein MamC (133 aa).

The Cytoplasmic segment spans residues 1-5 (MAAFN). Residues 6 to 26 (LALYLSKSIPGVGVLGGVIGG) traverse the membrane as a helical segment. Topologically, residues 27–67 (SAALAKNLKAKQRGEITTEEAVIDTGKEALGAGLATTVSAY) are lumenal. Residues 37–57 (KQRGEITTEEAVIDTGKEALG) are magnetite interacting component (MIC) binds magnetite. Residues 68–88 (AAGVVGGGLVVSLGTAFAVAV) form a helical membrane-spanning segment. Residues 89–133 (AGKYAWDYGMEQMEAKLQEKKHQEQGGQTYGDNPDPFDPQELETP) lie on the Cytoplasmic side of the membrane. A disordered region spans residues 105–133 (LQEKKHQEQGGQTYGDNPDPFDPQELETP).

Belongs to the magnetosome MamC family. As to quaternary structure, probably interacts with MamA.

Its subcellular location is the magnetosome membrane. Functionally, probably helps control the size of magnetite crystals; in vitro synthesis of magnetite yields larger and more well-developed magnetite crystals in the presence of purified MamC. Binds Fe(3+). The lumenal domain probably binds magnetite crystals, affecting crystal size and shape. Purified MamC self-assembles into micelles in the presence of ferric chloride hexahydrate (FeCl(3).6H(2)O); both oxygen and iron are present in the proteinaceous micelles. Whether this is relevant in vivo is unknown. The sequence is that of Magnetosome protein MamC from Magnetococcus marinus (strain ATCC BAA-1437 / JCM 17883 / MC-1).